Reading from the N-terminus, the 250-residue chain is Phosphoribosylaminoimidazole-succinocarboxamide synthase (250 aa).

This sequence belongs to the SAICAR synthetase family.

It carries out the reaction 5-amino-1-(5-phospho-D-ribosyl)imidazole-4-carboxylate + L-aspartate + ATP = (2S)-2-[5-amino-1-(5-phospho-beta-D-ribosyl)imidazole-4-carboxamido]succinate + ADP + phosphate + 2 H(+). It participates in purine metabolism; IMP biosynthesis via de novo pathway; 5-amino-1-(5-phospho-D-ribosyl)imidazole-4-carboxamide from 5-amino-1-(5-phospho-D-ribosyl)imidazole-4-carboxylate: step 1/2. The sequence is that of Phosphoribosylaminoimidazole-succinocarboxamide synthase from Bifidobacterium longum subsp. infantis (strain ATCC 15697 / DSM 20088 / JCM 1222 / NCTC 11817 / S12).